The chain runs to 495 residues: MAKPKKTPRPKAETPKGFRDYFGAEVTQRTEMLRDIAGVYHRYGFEALESSAVETVEALGKFLPDVDRPNEGVFAWQESEDDGAGDWMALRYDLTAPLARVYAQHRNDLPTPYRRYAMGPVWRNEKPGPGRYRQFYQCDADTVGSASMAADAEICAMLSDTLETVGIPRGDYVVRVNNRKVLNGVLETMGLADEGQRDAVLRTIDKFDKVGEDGVRELLGKGRLDASGAFIDGVGLSDDQAGPVLAFLTSRGADAATTVANLRAAVGASQIGVQGIDELEQIGDLLAAGGYGPDRIVIDPSVVRGLGYYTGPVYEAELTFEIFDEKGRKRQFGSVSGGGRYDDLVKRFTGQEVPATGVSIGVDRLLAALREKGRIRTAERGPVVVTVMDRDRMADYQAMVAELRNAGIRAEVYLGNPKNFGNQLKYADKRNSPVAVIEGGDERANGVVQIKDLILGAQIAANATLEEWKERPSQYEVARADLVAKVREILAEQAG.

Belongs to the class-II aminoacyl-tRNA synthetase family. Homodimer.

The protein resides in the cytoplasm. The catalysed reaction is tRNA(His) + L-histidine + ATP = L-histidyl-tRNA(His) + AMP + diphosphate + H(+). The polypeptide is Histidine--tRNA ligase (Ruegeria pomeroyi (strain ATCC 700808 / DSM 15171 / DSS-3) (Silicibacter pomeroyi)).